The primary structure comprises 35 residues: Pheromone-binding protein (35 aa).

It belongs to the PBP/GOBP family. In terms of tissue distribution, antenna.

In terms of biological role, this major soluble protein in olfactory sensilla of male moths might serve to solubilize the extremely hydrophobic pheromone molecules and to transport pheromone through the aqueous lymph to receptors located on olfactory cilia. In Hyalophora cecropia (Cecropia moth), this protein is Pheromone-binding protein.